A 277-amino-acid polypeptide reads, in one-letter code: Large ribosomal subunit protein uL2 (277 aa).

Disordered regions lie at residues 1–58 (MGIR…GGGH) and 223–277 (GVVM…GKKR). Over residues 23–33 (EITRSEPEKSL) the composition is skewed to basic and acidic residues. Positions 37 to 58 (LHGRGGRNAHGKITTRHKGGGH) are enriched in basic residues. A compositionally biased stretch (basic and acidic residues) spans 251-267 (GKPEGRTRRNKPSDKLI). Positions 268 to 277 (VRRRRTGKKR) are enriched in basic residues.

Belongs to the universal ribosomal protein uL2 family. In terms of assembly, part of the 50S ribosomal subunit. Forms a bridge to the 30S subunit in the 70S ribosome.

One of the primary rRNA binding proteins. Required for association of the 30S and 50S subunits to form the 70S ribosome, for tRNA binding and peptide bond formation. It has been suggested to have peptidyltransferase activity; this is somewhat controversial. Makes several contacts with the 16S rRNA in the 70S ribosome. This is Large ribosomal subunit protein uL2 from Saccharopolyspora erythraea (strain ATCC 11635 / DSM 40517 / JCM 4748 / NBRC 13426 / NCIMB 8594 / NRRL 2338).